The following is a 625-amino-acid chain: Ankyrin repeat domain-containing protein oryK (625 aa).

ANK repeat units follow at residues Met1–Gly27, Asp31–Pro60, Asn62–Arg89, Glu90–Asp119, Phe162–Cys195, Gln202–Ile232, Asp500–Phe530, Ser534–Leu562, and Glu568–Ile598.

Its pathway is secondary metabolite biosynthesis. In terms of biological role, ankyrin repeat domain-containing protein; part of the gene cluster that mediates the biosynthesis of oryzines, natural products with an unusual maleidride backbone. The two subunits of the fungal fatty acid synthase oryfasA and oryfasB probably form octenoic acid. This fatty acid is most likely activated by the acyl-CoA ligase oryP to give octenyl-CoA before the citrate synthase-like protein oryE catalyzes condensation with oxaloacetate to form tricarboxylic acid. The next steps of the pathways are conjectural, but a favorite possible route has been proposed, beginning with decarboxylation and concomitant dehydration by the decarboxylase oryM, followed by tautomerization, which may lead to the production of a diene intermediate. Reduction of this diene intermediate could give the known metabolite piliformic acid. On the pathway to oryzine B and oryzine A, however, hydroxylation of the diene by the alpha-ketoglutarate-dependent dioxygenase oryG and lactonisation by the lactonohydrolases oryH or oryL could give oryzine B directly. Finally, enoyl reduction by the dehydrogenase oryD would then convert oryzine B into oryzine A. This is Ankyrin repeat domain-containing protein oryK from Aspergillus oryzae (strain ATCC 42149 / RIB 40) (Yellow koji mold).